The following is a 260-amino-acid chain: Flap endonuclease Xni (260 aa).

Asp-104 contributes to the Mg(2+) binding site. In terms of domain architecture, 5'-3' exonuclease spans 160-249 (VSPQQLTDYW…LNGNLQQLRL (90 aa)). Residues Leu-171, Ala-172, Pro-180, Val-182, and Ile-185 each contribute to the K(+) site. Positions 184-189 (GIGPKS) are interaction with DNA.

It belongs to the Xni family. Mg(2+) is required as a cofactor. It depends on K(+) as a cofactor.

Has flap endonuclease activity. During DNA replication, flap endonucleases cleave the 5'-overhanging flap structure that is generated by displacement synthesis when DNA polymerase encounters the 5'-end of a downstream Okazaki fragment. The protein is Flap endonuclease Xni of Pectobacterium carotovorum subsp. carotovorum (strain PC1).